We begin with the raw amino-acid sequence, 361 residues long: Probable G-protein coupled receptor 25 (361 aa).

Residues 1-39 lie on the Extracellular side of the membrane; that stretch reads MAPTEPWSPSPGSAPWDYSGLDGLEELELCPAGDLPYGY. A helical transmembrane segment spans residues 40–60; sequence VYIPALYLAAFAVGLLGNAFV. The Cytoplasmic portion of the chain corresponds to 61–75; the sequence is VWLLAGRRGPRRLVD. Residues 76–96 traverse the membrane as a helical segment; it reads TFVLHLAAADLGFVLTLPLWA. The Extracellular segment spans residues 97–126; sequence AAAALGGRWPFGDGLCKLSSFALAGTRCAG. A helical membrane pass occupies residues 127-147; that stretch reads ALLLAGMSVDRYLAVVKLLEA. The Cytoplasmic portion of the chain corresponds to 148–155; that stretch reads RPLRTPRC. A helical membrane pass occupies residues 156–176; sequence ALASCCGVWAVALLAGLPSLV. The Extracellular portion of the chain corresponds to 177-200; it reads YRGLQPLPGGQDSQCGEEPSHAFQ. Residues 201–220 traverse the membrane as a helical segment; it reads GLSLLLLLLTFVLPLVVTLF. The Cytoplasmic portion of the chain corresponds to 221 to 242; sequence CYCRISRRLRRPPHVGRARRNS. A helical transmembrane segment spans residues 243–263; it reads LRIIFAIESTFVGSWLPFSAL. The Extracellular segment spans residues 264-289; sequence RAVFHLARLGALPLPCPLLLALRWGL. A helical transmembrane segment spans residues 290 to 310; the sequence is TIATCLAFVNSCANPLIYLLL. Topologically, residues 311 to 361 are cytoplasmic; the sequence is DRSFRARALDGACGRTGRLARRISSASSLSRDDSSVFRCRAQAANTASASW.

Belongs to the G-protein coupled receptor 1 family.

It localises to the cell membrane. In terms of biological role, orphan receptor. In Homo sapiens (Human), this protein is Probable G-protein coupled receptor 25 (GPR25).